The chain runs to 591 residues: DDB1- and CUL4-associated factor 8 (591 aa).

Residues 1–14 are compositionally biased toward basic and acidic residues; it reads MSSKRPSTDGRRDL. The segment at 1–140 is disordered; the sequence is MSSKRPSTDG…EDWVSSETTA (140 aa). 2 positions are modified to phosphoserine: Ser21 and Ser22. A Nuclear export signal motif is present at residues 39-50; sequence IEVEASDLSLSL. Basic and acidic residues-rich tracts occupy residues 65–99 and 118–131; these read RGTD…HGHS and SRDQ…RALE. Residues Ser99, Ser123, and Ser124 each carry the phosphoserine modification. 7 WD repeats span residues 185-224, 228-269, 275-315, 323-363, 379-418, 426-466, and 470-509; these read GHTG…PVLD, GHKS…CCKN, QHKG…PASK, EKKV…ENEN, ESKA…GAQY, RNNA…IIQF, and DKGG…STEL. Arg198 carries the post-translational modification Omega-N-methylarginine; by PRMT1. The tract at residues 552–591 is disordered; sequence HRRWREPGVGATDADSDESPSSSDTSDEEEGPDRVQCMPS.

This sequence belongs to the WD repeat DCAF8 family. In terms of assembly, interacts with DDB1, CUL4A and CUL4B. Interacts with KPNA1, KPNB1 and XPO1.

The protein resides in the nucleus. It localises to the cytoplasm. Its pathway is protein modification; protein ubiquitination. Its function is as follows. May function as a substrate receptor for CUL4-DDB1 E3 ubiquitin-protein ligase complex. This chain is DDB1- and CUL4-associated factor 8 (Dcaf8), found in Rattus norvegicus (Rat).